The primary structure comprises 348 residues: MTAPSQVLKIRRPDDWHVHLRDGDMLKTVVPYTSEIYGRAIVMPNLASPITTVDAAIAYRQRILDAVPAGHDFTPLMTCYLTDSLDADELERGFHEGVFTAAKLYPANATTNSSHGVTSVDAIMPVLERMEKLGMPLLVHGEVTHADVDIFDREARFIDTVMEPLRQRLTALKVVFEHITTKDAAQYVRDGSDNLAATITPQHLMFNRNDMLVGGIRPHLYCLPILKRNIHQQALRDLVASGFTRAFLGTDSAPHSRHRKETRCGCAGCFNAPSALGSYAAVFEEMNALAHFEAFCSLNGPQFYGLPVNTGWVELVRDEQQIPENIALADDSLVPFLAGETVRWSVKK.

Positions 17 and 19 each coordinate Zn(2+). Residues 19–21 (HLR) and Asn-45 each bind substrate. Residues Lys-103, His-140, and His-178 each contribute to the Zn(2+) site. Lys-103 is subject to N6-carboxylysine. His-140 contacts substrate. A substrate-binding site is contributed by Leu-223. Asp-251 is a Zn(2+) binding site. Asp-251 is an active-site residue. Residues His-255 and Ala-267 each contribute to the substrate site.

Belongs to the metallo-dependent hydrolases superfamily. DHOase family. Class II DHOase subfamily. Homodimer. Zn(2+) is required as a cofactor.

It catalyses the reaction (S)-dihydroorotate + H2O = N-carbamoyl-L-aspartate + H(+). It participates in pyrimidine metabolism; UMP biosynthesis via de novo pathway; (S)-dihydroorotate from bicarbonate: step 3/3. Its function is as follows. Catalyzes the reversible cyclization of carbamoyl aspartate to dihydroorotate. The chain is Dihydroorotase from Salmonella paratyphi A (strain ATCC 9150 / SARB42).